The primary structure comprises 289 residues: Diaminopimelate epimerase (289 aa).

Substrate contacts are provided by Asn-13, Gln-52, and Asn-72. Catalysis depends on Cys-81, which acts as the Proton donor. Substrate-binding positions include 82 to 83 (GN), Asn-167, Asn-201, and 219 to 220 (ER). The Proton acceptor role is filled by Cys-228. 229-230 (GT) is a substrate binding site.

It belongs to the diaminopimelate epimerase family. In terms of assembly, homodimer.

Its subcellular location is the cytoplasm. It catalyses the reaction (2S,6S)-2,6-diaminopimelate = meso-2,6-diaminopimelate. It participates in amino-acid biosynthesis; L-lysine biosynthesis via DAP pathway; DL-2,6-diaminopimelate from LL-2,6-diaminopimelate: step 1/1. In terms of biological role, catalyzes the stereoinversion of LL-2,6-diaminopimelate (L,L-DAP) to meso-diaminopimelate (meso-DAP), a precursor of L-lysine and an essential component of the bacterial peptidoglycan. The sequence is that of Diaminopimelate epimerase from Caulobacter sp. (strain K31).